The sequence spans 226 residues: Uracil-DNA glycosylase (226 aa).

Residue Asp-64 is the Proton acceptor of the active site.

This sequence belongs to the uracil-DNA glycosylase (UDG) superfamily. UNG family.

The protein localises to the cytoplasm. It catalyses the reaction Hydrolyzes single-stranded DNA or mismatched double-stranded DNA and polynucleotides, releasing free uracil.. In terms of biological role, excises uracil residues from the DNA which can arise as a result of misincorporation of dUMP residues by DNA polymerase or due to deamination of cytosine. The protein is Uracil-DNA glycosylase of Photorhabdus laumondii subsp. laumondii (strain DSM 15139 / CIP 105565 / TT01) (Photorhabdus luminescens subsp. laumondii).